We begin with the raw amino-acid sequence, 441 residues long: ATP-dependent protease ATPase subunit HslU (441 aa).

ATP is bound by residues Ile-18, 60-65, Asp-254, Glu-319, and Arg-391; that span reads GVGKTE.

This sequence belongs to the ClpX chaperone family. HslU subfamily. As to quaternary structure, a double ring-shaped homohexamer of HslV is capped on each side by a ring-shaped HslU homohexamer. The assembly of the HslU/HslV complex is dependent on binding of ATP.

The protein resides in the cytoplasm. ATPase subunit of a proteasome-like degradation complex; this subunit has chaperone activity. The binding of ATP and its subsequent hydrolysis by HslU are essential for unfolding of protein substrates subsequently hydrolyzed by HslV. HslU recognizes the N-terminal part of its protein substrates and unfolds these before they are guided to HslV for hydrolysis. The sequence is that of ATP-dependent protease ATPase subunit HslU from Shewanella woodyi (strain ATCC 51908 / MS32).